The primary structure comprises 481 residues: 3-isopropylmalate dehydratase large subunit (481 aa).

3 residues coordinate [4Fe-4S] cluster: C355, C415, and C418.

It belongs to the aconitase/IPM isomerase family. LeuC type 1 subfamily. Heterodimer of LeuC and LeuD. The cofactor is [4Fe-4S] cluster.

The catalysed reaction is (2R,3S)-3-isopropylmalate = (2S)-2-isopropylmalate. It functions in the pathway amino-acid biosynthesis; L-leucine biosynthesis; L-leucine from 3-methyl-2-oxobutanoate: step 2/4. Functionally, catalyzes the isomerization between 2-isopropylmalate and 3-isopropylmalate, via the formation of 2-isopropylmaleate. This chain is 3-isopropylmalate dehydratase large subunit, found in Symbiobacterium thermophilum (strain DSM 24528 / JCM 14929 / IAM 14863 / T).